Reading from the N-terminus, the 71-residue chain is Transcription modulator YdgT (71 aa).

Belongs to the Hha/YmoA/Cnu family. In terms of assembly, forms complexes with both H-NS and StpA.

Its function is as follows. Binds to H-NS and modified the range of genes it silences; H-NS alonge silences core gene while the H-NS-Hha complex (and presumably also H-NS-YdgT) silences genes acquired by horizontal gene transfer. Plays a role silencing virulence factors in the absence of factors that induce pathogenicity. The complex formed with H-NS binds to the specific 26-bp cnb site in the origin of replication oriC. This is Transcription modulator YdgT (ydgT) from Salmonella choleraesuis (strain SC-B67).